The chain runs to 205 residues: MSGFENDISIGATMTQSQTSQGFSLQMFGKPTIVLAHLSFKGAALFFYFFANFFTNSFIVQFLVILTLLSMDFWTVKNITGRLLVGLRWWNFVDADGNNHWKFESAKDMTRFATIDRRVFWLGLVVGPAAWIFFVVTAFLTLKFEWMIVALLGALMNMANLWGYLRCRWNNTEQMTSYFQKWAFLNVLRRAQQPPQEYQNPVFSA.

Transmembrane regions (helical) follow at residues 45–65 (LFFY…FLVI), 119–139 (VFWL…VTAF), and 144–164 (FEWM…LWGY).

Belongs to the TVP23 family.

It localises to the membrane. This is an uncharacterized protein from Caenorhabditis elegans.